The following is a 215-amino-acid chain: 3-demethoxyubiquinol 3-hydroxylase (215 aa).

The Fe cation site is built by E64, E94, H97, E146, E178, and H181.

This sequence belongs to the COQ7 family. The cofactor is Fe cation.

Its subcellular location is the cell membrane. The catalysed reaction is a 5-methoxy-2-methyl-3-(all-trans-polyprenyl)benzene-1,4-diol + AH2 + O2 = a 3-demethylubiquinol + A + H2O. It participates in cofactor biosynthesis; ubiquinone biosynthesis. Catalyzes the hydroxylation of 2-nonaprenyl-3-methyl-6-methoxy-1,4-benzoquinol during ubiquinone biosynthesis. This is 3-demethoxyubiquinol 3-hydroxylase from Coxiella burnetii (strain Dugway 5J108-111).